The primary structure comprises 411 residues: Argininosuccinate synthase (411 aa).

Residues 10–18 (AYSGGLDTS) and alanine 37 contribute to the ATP site. Residues tyrosine 89 and serine 94 each contribute to the L-citrulline site. Residue glycine 119 participates in ATP binding. L-aspartate contacts are provided by threonine 121, asparagine 125, and aspartate 126. Asparagine 125 lines the L-citrulline pocket. L-citrulline contacts are provided by arginine 129, serine 178, serine 187, glutamate 263, and tyrosine 275.

This sequence belongs to the argininosuccinate synthase family. Type 1 subfamily. In terms of assembly, homotetramer.

It is found in the cytoplasm. It catalyses the reaction L-citrulline + L-aspartate + ATP = 2-(N(omega)-L-arginino)succinate + AMP + diphosphate + H(+). It functions in the pathway amino-acid biosynthesis; L-arginine biosynthesis; L-arginine from L-ornithine and carbamoyl phosphate: step 2/3. The sequence is that of Argininosuccinate synthase from Aeromonas hydrophila subsp. hydrophila (strain ATCC 7966 / DSM 30187 / BCRC 13018 / CCUG 14551 / JCM 1027 / KCTC 2358 / NCIMB 9240 / NCTC 8049).